A 254-amino-acid polypeptide reads, in one-letter code: Mamu class II histocompatibility antigen, DR alpha chain (254 aa).

The first 25 residues, 1–25 (MAESGVPVLGFFIIAVLMSAQESWA), serve as a signal peptide directing secretion. The interval 26 to 109 (IKEEHVIIQA…KRSNNTPITN (84 aa)) is alpha-1. The Extracellular portion of the chain corresponds to 26–216 (IKEEHVIIQA…APSPLPETTE (191 aa)). An N-linked (GlcNAc...) asparagine glycan is attached at asparagine 103. The segment at 110–203 (VPPEVTVLTN…CLDAPLLKHW (94 aa)) is alpha-2. The region spanning 112 to 204 (PEVTVLTNSP…LDAPLLKHWE (93 aa)) is the Ig-like C1-type domain. Cysteines 132 and 188 form a disulfide. The connecting peptide stretch occupies residues 204-216 (EFDAPSPLPETTE). The chain crosses the membrane as a helical span at residues 217-239 (NVVCALGLIVGLVGIIVGTVFII). Over 240 to 254 (KGVRKSNAAERRGPL) the chain is Cytoplasmic. A Glycyl lysine isopeptide (Lys-Gly) (interchain with G-Cter in ubiquitin) cross-link involves residue lysine 244.

Belongs to the MHC class II family. Heterodimer of an alpha chain and a beta chain.

It localises to the membrane. This is Mamu class II histocompatibility antigen, DR alpha chain (Mamu-DRA) from Macaca mulatta (Rhesus macaque).